A 406-amino-acid chain; its full sequence is 5-cytosine rRNA methyltransferase NSUN4 (406 aa).

The S-adenosyl-L-methionine site is built by Gly-207, Gly-208, Lys-209, Asp-226, Arg-231, Asp-259, Gly-260, and Asp-277. The active-site Nucleophile is the Cys-332.

It belongs to the class I-like SAM-binding methyltransferase superfamily. RsmB/NOP family.

It is found in the mitochondrion. The catalysed reaction is a cytidine in rRNA + S-adenosyl-L-methionine = a 5-methylcytidine in rRNA + S-adenosyl-L-homocysteine + H(+). It catalyses the reaction a cytidine in mRNA + S-adenosyl-L-methionine = a 5-methylcytidine in mRNA + S-adenosyl-L-homocysteine + H(+). Mitochondrial RNA cytosine C(5)-methyltransferase that methylates cytosine to 5-methylcytosine (m5C) in various RNAs, such as rRNAs, mRNAs and some long non-coding RNAs (lncRNAs). Involved in mitochondrial ribosome small subunit (SSU) maturation by catalyzing methylation of mitochondrial 12S rRNA. The sequence is that of 5-cytosine rRNA methyltransferase NSUN4 (nsun4) from Xenopus laevis (African clawed frog).